We begin with the raw amino-acid sequence, 201 residues long: Recombination protein RecR (201 aa).

The segment at 55–70 (CVCCGAFCEGRTCALC) adopts a C4-type zinc-finger fold. The region spanning 78–173 (GIICVVERAQ…IVTRLASGIP (96 aa)) is the Toprim domain.

The protein belongs to the RecR family.

May play a role in DNA repair. It seems to be involved in an RecBC-independent recombinational process of DNA repair. It may act with RecF and RecO. This chain is Recombination protein RecR, found in Treponema pallidum (strain Nichols).